The primary structure comprises 219 residues: Ras-related protein Rab-3D (219 aa).

A2 bears the N-acetylalanine mark. 29–37 lines the GDP pocket; the sequence is GNSSVGKTS. Positions 31, 32, 33, 34, 35, 36, 37, 49, and 53 each coordinate GTP. T36 is a binding site for Mg(2+). Positions 49–58 match the Switch 1 motif; that stretch reads PAFVSTVGID. 2 residues coordinate Mg(2+): T54 and D77. Residue G80 coordinates GTP. The Switch 2 signature appears at 80 to 96; the sequence is GQERYRTITTAYYRGAM. T86 bears the Phosphothreonine; by LRRK2 mark. 5 residues coordinate GTP: N135, K136, D138, A166, and K167. GDP-binding positions include 135–138 and 165–167; these read NKCD and SAK. Phosphoserine is present on S190. Residues 190–199 show a composition bias toward low complexity; the sequence is SLEPSSSSGS. Residues 190 to 219 form a disordered region; it reads SLEPSSSSGSNGKGPAVGDAPAPQPSSCSC. Residues C217 and C219 are each lipidated (S-geranylgeranyl cysteine). At C219 the chain carries Cysteine methyl ester.

Belongs to the small GTPase superfamily. Rab family. In terms of assembly, interacts with RIMS1, RIMS2, RPH3A, RPH3AL and RAB3IP. The GTP-bound form interacts with REP15. Interacts with CHM and CHML; phosphorylation at Thr-86 disrupts these interactions. Interacts with MADD (via uDENN domain); the GTP-bound form is preferred for interaction. The cofactor is Mg(2+). Post-translationally, phosphorylation of Thr-86 in the switch II region by LRRK2 prevents the association of RAB regulatory proteins, including CHM and CHML. Highly expressed in granulocytes of peripheral blood. Constitutively expressed at low levels in all hematopoietic cell lines investigated.

The protein resides in the cell membrane. It carries out the reaction GTP + H2O = GDP + phosphate + H(+). Its activity is regulated as follows. Regulated by guanine nucleotide exchange factors (GEFs) which promote the exchange of bound GDP for free GTP. Regulated by GTPase activating proteins (GAPs) which increase the GTP hydrolysis activity. Inhibited by GDP dissociation inhibitors (GDIs) which prevent Rab-GDP dissociation. Its function is as follows. The small GTPases Rab are key regulators of intracellular membrane trafficking, from the formation of transport vesicles to their fusion with membranes. Rabs cycle between an inactive GDP-bound form and an active GTP-bound form that is able to recruit to membranes different sets of downstream effectors directly responsible for vesicle formation, movement, tethering and fusion. RAB3D may be involved in the insulin-induced exocytosis of GLUT4-containing vesicles in adipocytes. The sequence is that of Ras-related protein Rab-3D from Homo sapiens (Human).